The following is a 651-amino-acid chain: DNA ligase (651 aa).

NAD(+) is bound by residues Asp-30 to Asp-34, Ser-79 to Met-80, and Glu-105. Lys-107 acts as the N6-AMP-lysine intermediate in catalysis. Positions 128, 162, and 301 each coordinate NAD(+). The Zn(2+) site is built by Cys-395, Cys-398, Cys-411, and Cys-416. Residues Ala-570 to Val-651 enclose the BRCT domain.

The protein belongs to the NAD-dependent DNA ligase family. LigA subfamily. Mg(2+) is required as a cofactor. Requires Mn(2+) as cofactor.

The enzyme catalyses NAD(+) + (deoxyribonucleotide)n-3'-hydroxyl + 5'-phospho-(deoxyribonucleotide)m = (deoxyribonucleotide)n+m + AMP + beta-nicotinamide D-nucleotide.. In terms of biological role, DNA ligase that catalyzes the formation of phosphodiester linkages between 5'-phosphoryl and 3'-hydroxyl groups in double-stranded DNA using NAD as a coenzyme and as the energy source for the reaction. It is essential for DNA replication and repair of damaged DNA. The chain is DNA ligase from Campylobacter lari (strain RM2100 / D67 / ATCC BAA-1060).